A 415-amino-acid polypeptide reads, in one-letter code: Teichoic acid D-alanyltransferase (415 aa).

At 1 to 16 the chain is on the extracellular side; the sequence is MIDFLKQLPHLEPYGN. Residues 17-36 form a helical membrane-spanning segment; it reads PFYFIYLGIALLPIFIGLFF. Residues 37-40 lie on the Cytoplasmic side of the membrane; it reads KKRF. The helical transmembrane segment at 41 to 56 threads the bilayer; that stretch reads AIYECLVSITFIVLAL. At 57–60 the chain is on the extracellular side; it reads TGTH. Residues 61–87 traverse the membrane as a helical segment; sequence ASQILALLFYIVWQIIWVYSYKRYRSQ. Over 88-90 the chain is Cytoplasmic; sequence RDN. Residues 91–115 form a helical membrane-spanning segment; that stretch reads KWVFYLHSFLVVLPLILVKVEPTIN. Residues 116 to 125 lie on the Extracellular side of the membrane; sequence GTQSLLNFLG. The chain crosses the membrane as a helical span at residues 126 to 142; sequence ISYLTFRAVGMIIEMRD. At 143–149 the chain is on the cytoplasmic side; the sequence is GVLKEFT. An intramembrane segment occupies 150 to 179; it reads LGEFLRFMLFMPTFTSGPIDRFKRFNEDYQ. Topologically, residues 180-183 are cytoplasmic; sequence SIPN. A helical membrane pass occupies residues 184–227; sequence RDELLNMLEQAVKYIMLGFLYKFVLAQIFGSMLLPPLKAQALSQ. Residues 228-232 are Extracellular-facing; sequence GGIFN. Residues 233 to 264 form a helical membrane-spanning segment; it reads LPTLGVMYVYGFDLFFDFAGYSMFALAVSNLM. At 265 to 274 the chain is on the cytoplasmic side; sequence GIKSPINFDK. An intramembrane segment occupies 275-311; it reads PFISRDMKEFWNRWHMSLSFWFRDFVFMRLVIVLMRN. The Cytoplasmic portion of the chain corresponds to 312-316; sequence KVFKN. The chain crosses the membrane as a helical span at residues 317–336; that stretch reads RNTTSNVAYIINMMVMGFWH. Residue His336 is part of the active site. Residues 337 to 339 are Extracellular-facing; that stretch reads GIT. Residues 340 to 373 traverse the membrane as a helical segment; that stretch reads WYYIAYGIFHGIGLVINDAWLRKKKTINKDRKKA. Topologically, residues 374-381 are cytoplasmic; that stretch reads GLKPLPEN. The chain crosses the membrane as a helical span at residues 382-404; that stretch reads KWTKALGIFITFNTVMLSFLIFS. Residues 405 to 415 lie on the Extracellular side of the membrane; that stretch reads GFLNDLWFTKK.

This sequence belongs to the membrane-bound acyltransferase family.

Its subcellular location is the cell membrane. The protein operates within cell wall biogenesis; lipoteichoic acid biosynthesis. O-acyltransferase that catalyzes D-alanylation of both teichoic acid and lipoteichoic acid (LTA). D-alanylation of LTA plays an important role in modulating the properties of the cell wall in Gram-positive bacteria, influencing the net charge of the cell wall. Catalyzes D-alanylation from DltC carrier protein. The protein is Teichoic acid D-alanyltransferase of Streptococcus thermophilus (strain ATCC BAA-250 / LMG 18311).